Here is a 121-residue protein sequence, read N- to C-terminus: Acid shock protein (121 aa).

The first 21 residues, 1-21, serve as a signal peptide directing secretion; the sequence is MKKVLALMVAATLGLSSVAFA. The propeptide occupies 22–63; it reads ADTTATATPAATSTTATVAAQTKATQHQKHKVTKKTTEQKAQ. The tract at residues 40–121 is disordered; it reads AAQTKATQHQ…AKKPVAAPAA (82 aa). The segment covering 74–83 has biased composition (low complexity); the sequence is VQKAPVQKAQ. The span at 84 to 93 shows a compositional bias: basic residues; that stretch reads AAKKHVKKAS. A compositionally biased stretch (low complexity) spans 94–103; it reads VQKAPVQKAQ. Basic residues predominate over residues 104–113; it reads AAKKHHKTAK.

This sequence belongs to the Asr family. Post-translationally, proteolytic processing gives rise to the active protein.

Its subcellular location is the periplasm. In terms of biological role, required for growth and/or survival at acidic conditions. This is Acid shock protein from Yersinia pseudotuberculosis serotype O:1b (strain IP 31758).